The primary structure comprises 91 residues: Putative regulatory protein PTH_1796 (91 aa).

The protein belongs to the RemA family.

The chain is Putative regulatory protein PTH_1796 from Pelotomaculum thermopropionicum (strain DSM 13744 / JCM 10971 / SI).